The chain runs to 473 residues: NAC domain-containing protein 68 (473 aa).

One can recognise an NAC domain in the interval 4–154; that stretch reads GLIGYRFSPT…KYVVCQVKYK (151 aa). A DNA-binding region spans residues 108-160; sequence IGIKKTLVYHEGKSPHGVRTPWVMHEYHITCLPHHKRKYVVCQVKYKGEAAEI. The segment at 326-380 is disordered; the sequence is DHMPRKPVTGTIDYSSDSGSDAGSISTTSYQGTSSPNISVGSSSRHLSSCSSTDS. Low complexity-rich tracts occupy residues 340-354 and 364-379; these read SSDS…STTS and SVGS…SSTD. A helical transmembrane segment spans residues 446–468; the sequence is FIYLMKMIIGNIISVLLPVKRLI.

The protein localises to the membrane. It localises to the nucleus. Its function is as follows. Transcription activator activated by proteolytic cleavage through regulated intramembrane proteolysis (RIP) mediated by calpain or its functional homolog. Regulates cytokinin signaling during cell division. This is NAC domain-containing protein 68 (NAC68) from Arabidopsis thaliana (Mouse-ear cress).